The sequence spans 447 residues: Cytochrome c biogenesis protein CcsB (447 aa).

3 helical membrane passes run 28–48, 87–107, and 173–193; these read LRLA…GTVI, TWWY…CTFR, and IGPI…IWGA.

It belongs to the Ccs1/CcsB family. As to quaternary structure, may interact with CcsA.

It localises to the cellular thylakoid membrane. Its function is as follows. Required during biogenesis of c-type cytochromes (cytochrome c6 and cytochrome f) at the step of heme attachment. In Microcystis aeruginosa (strain NIES-843 / IAM M-2473), this protein is Cytochrome c biogenesis protein CcsB.